Consider the following 570-residue polypeptide: Sulfite reductase [NADPH] hemoprotein beta-component (570 aa).

[4Fe-4S] cluster-binding residues include Cys434, Cys440, Cys479, and Cys483. A siroheme-binding site is contributed by Cys483.

It belongs to the nitrite and sulfite reductase 4Fe-4S domain family. As to quaternary structure, alpha(8)-beta(8). The alpha component is a flavoprotein, the beta component is a hemoprotein. Siroheme serves as cofactor. [4Fe-4S] cluster is required as a cofactor.

The enzyme catalyses hydrogen sulfide + 3 NADP(+) + 3 H2O = sulfite + 3 NADPH + 4 H(+). The protein operates within sulfur metabolism; hydrogen sulfide biosynthesis; hydrogen sulfide from sulfite (NADPH route): step 1/1. Its function is as follows. Component of the sulfite reductase complex that catalyzes the 6-electron reduction of sulfite to sulfide. This is one of several activities required for the biosynthesis of L-cysteine from sulfate. This chain is Sulfite reductase [NADPH] hemoprotein beta-component, found in Escherichia coli O127:H6 (strain E2348/69 / EPEC).